We begin with the raw amino-acid sequence, 507 residues long: F-box only protein 31 (507 aa).

The disordered stretch occupies residues 19–42 (RQQRRGPAETAAADSEADTDPEEE). A Phosphoserine modification is found at Ser33. Acidic residues predominate over residues 33–42 (SEADTDPEEE). The residue at position 37 (Thr37) is a Phosphothreonine. A D box motif is present at residues 50–55 (RCSLLE). One can recognise an F-box domain in the interval 50-96 (RCSLLELPPELLVEIFASLPGTDLPSLAQVCSRFRRILHTDTIWRRR). The Zn(2+) site is built by Cys192, His200, Cys216, and His222. Ser264 is modified (phosphoserine; by ATM). Positions 283–285 (DDL) match the DDL motif motif. Residues 364-421 (RQEQEAGEGPAPHREPAVKDPEGPPAKASKEAGPGAEAAEQSSTSGQGQPFVLPAGVS) form a disordered region. Over residues 374–385 (APHREPAVKDPE) the composition is skewed to basic and acidic residues. The residue at position 448 (Ser448) is a Phosphoserine.

Belongs to the FBXO31 family. Part of a SCF (SKP1-cullin-F-box) protein ligase complex SCF(FBXO31) composed of CUL1, SKP1, RBX1 and FBXO31. Interacts (when phosphorylated at Ser-33) with CDC20, promoting ubiquitination by the APC/C complex. Post-translationally, phosphorylation at Ser-264 by ATM following gamma-irradiation results in its stabilization. Phosphorylation at Ser-448 in absence of stress promotes its ubiquitination and degradation by the SCF(FBXO46) complex. Phosphorylation at Ser-33 by AKT1 promotes association with CDC20 and ubiquitination by the APC/C complex. In terms of processing, ubiquitinated by the SCF(FBXO46) complex in absence of stress, promoting its degradation. Ubiquitinated by the APC/C complex following phosphorylation at Ser-33, leading to its degradation by the proteasome.

The protein resides in the cytoplasm. Its subcellular location is the cytoskeleton. The protein localises to the microtubule organizing center. It localises to the centrosome. Its pathway is protein modification; protein ubiquitination. Its function is as follows. Substrate-recognition component of the SCF(FBXO31) protein ligase complex, which specifically mediates the ubiquitination of proteins amidated at their C-terminus in response to oxidative stress, leading to their degradation by the proteasome. FBXO31 specifically recognizes and binds C-terminal peptides bearing an amide: C-terminal amidation in response to oxidative stress takes place following protein fragmentation. The SCF(FBXO31) also plays a role in G1 arrest following DNA damage by mediating ubiquitination of phosphorylated cyclin-D1 (CCND1), promoting its degradation by the proteasome, resulting in G1 arrest. The SCF(FBXO31) complex is however not a major regulator of CCND1 stability during the G1/S transition. In response to genotoxic stress, the SCF(FBXO31) complex directs ubiquitination and degradation of phosphorylated MDM2, thereby promoting p53/TP53-mediated DNA damage response. SCF(FBXO31) complex is required for genomic integrity by catalyzing ubiquitination and degradation of cyclin-A (CCNA1 and/or CCNA2) during the G1 phase. In response to genotoxic stress, the SCF(FBXO31) complex directs ubiquitination and degradation of phosphorylated FBXO46 and MAP2K6. SCF(FBXO31) complex promotes ubiquitination and degradation of CDT1 during the G2 phase to prevent re-replication. The SCF(FBXO31) complex also mediates ubiquitination and degradation of DUSP6, OGT and PARD6A. The protein is F-box only protein 31 of Rattus norvegicus (Rat).